Consider the following 464-residue polypeptide: Zinc transporter 6-A (464 aa).

Residues 1-33 are Cytoplasmic-facing; it reads MGTIYLFRKTQRSLLGKLAQEFRLVTADRRSWK. A helical transmembrane segment spans residues 34-54; the sequence is ILLFGAINVVCTAFLLTWCSS. Over 55–64 the chain is Extracellular; the sequence is TNSMALTAYT. Residues 65–85 traverse the membrane as a helical segment; it reads YLTIFDLFSLITSLISYWVTM. Residues 86–98 lie on the Cytoplasmic side of the membrane; the sequence is KKPSPTYSFGFER. A helical transmembrane segment spans residues 99 to 119; that stretch reads FEVLAVFASTVLAQLGALFIL. Residues 120–134 lie on the Extracellular side of the membrane; that stretch reads KESAERFIEQPEIHT. A helical membrane pass occupies residues 135–155; that stretch reads GRLLVGTFVALFFNLFTMLSI. At 156-200 the chain is on the cytoplasmic side; sequence RNKPFAYVSDAASTSWLQEHVADLSRSLCGIIPGLSSIFLPRMNP. Residues 201 to 221 form a helical membrane-spanning segment; that stretch reads FVLIDIAGALALCITYMLIEI. Residues 222–223 lie on the Extracellular side of the membrane; the sequence is NN. Residues 224–244 traverse the membrane as a helical segment; sequence YFAVDTASAVAIAVMTFGTMY. Residues 245-464 are Cytoplasmic-facing; the sequence is PMSVYSGKVL…TPGQFTQFRQ (220 aa).

Belongs to the cation diffusion facilitator (CDF) transporter (TC 2.A.4) family. SLC30A subfamily. As to quaternary structure, heterodimer with SLC30A5; form a functional zinc ion transmembrane transporter.

It is found in the golgi apparatus. The protein resides in the trans-Golgi network membrane. Has probably no intrinsic transporter activity but together with SLC30A5 forms a functional zinc ion:proton antiporter heterodimer, mediating zinc entry into the lumen of organelles along the secretory pathway. As part of that zinc ion:proton antiporter, contributes to zinc ion homeostasis within the early secretory pathway and regulates the activation and folding of enzymes like alkaline phosphatases and enzymes involved in phosphatidylinositol glycan anchor biosynthesis. This Xenopus laevis (African clawed frog) protein is Zinc transporter 6-A (slc30a6-a).